We begin with the raw amino-acid sequence, 188 residues long: Pro-adrenomedullin (188 aa).

A signal peptide spans 1 to 21 (MKLVPVALLYLGSLAFLGVDT). Arg-41 is modified (arginine amide). A propeptide spanning residues 45-92 (ELRESSSYPTGLADVKAGPVQTLIRPQDVKGASRSPQASSPDAARIRV) is cleaved from the precursor. The interval 69-89 (RPQDVKGASRSPQASSPDAAR) is disordered. Cys-110 and Cys-115 are disulfide-bonded. Positions 129–175 (DKDKDGSAPRSKISPQGYGRRRRRSLPEAGLGRTLLQPPEPKLRGAP) are disordered. Tyr-146 carries the post-translational modification Tyrosine amide. Residues 153 to 188 (SLPEAGLGRTLLQPPEPKLRGAPDSRVHQVLATLRI) constitute a propeptide, preproAM C-terminal fragment.

The protein belongs to the adrenomedullin family.

Its subcellular location is the secreted. Functionally, adrenomedullin/ADM and proadrenomedullin N-20 terminal peptide/PAMP are peptide hormones that act as potent hypotensive and vasodilatator agents. Numerous actions have been reported most related to the physiologic control of fluid and electrolyte homeostasis. In terms of biological role, ADM function is mediated by the CALCRL-RAMP2 and CALCRL-RAMP3 receptor complexes with ADM showing the highest potency for the CALCRL-RAMP2 complex. In Bos taurus (Bovine), this protein is Pro-adrenomedullin (ADM).